We begin with the raw amino-acid sequence, 369 residues long: Outer membrane protein P2 (369 aa).

The first 20 residues, 1–20 (MKKTLAALIVGAFAASAANA), serve as a signal peptide directing secretion.

Belongs to the Gram-negative porin family. Homotrimer.

The protein resides in the cell outer membrane. Its function is as follows. Forms pores that allow passive diffusion of small molecules across the outer membrane. The polypeptide is Outer membrane protein P2 (ompP2) (Haemophilus influenzae).